Consider the following 315-residue polypeptide: Ribose-phosphate pyrophosphokinase (315 aa).

ATP-binding positions include 41–43 (DGE) and 100–101 (RQ). 2 residues coordinate Mg(2+): H134 and D173. K196 is an active-site residue. D-ribose 5-phosphate-binding positions include R198, D222, and 226–230 (DTAGT).

This sequence belongs to the ribose-phosphate pyrophosphokinase family. Class I subfamily. In terms of assembly, homohexamer. Mg(2+) serves as cofactor.

The protein localises to the cytoplasm. The catalysed reaction is D-ribose 5-phosphate + ATP = 5-phospho-alpha-D-ribose 1-diphosphate + AMP + H(+). It participates in metabolic intermediate biosynthesis; 5-phospho-alpha-D-ribose 1-diphosphate biosynthesis; 5-phospho-alpha-D-ribose 1-diphosphate from D-ribose 5-phosphate (route I): step 1/1. Its function is as follows. Involved in the biosynthesis of the central metabolite phospho-alpha-D-ribosyl-1-pyrophosphate (PRPP) via the transfer of pyrophosphoryl group from ATP to 1-hydroxyl of ribose-5-phosphate (Rib-5-P). The chain is Ribose-phosphate pyrophosphokinase from Bacillus caldolyticus.